Reading from the N-terminus, the 954-residue chain is SWI/SNF-related matrix-associated actin-dependent regulator of chromatin subfamily A-like protein 1 (954 aa).

2 disordered regions span residues 1 to 20 (MSLP…RQKA) and 27 to 238 (KLLA…NSQK). Ser2 is modified (N-acetylserine). Residues 3–34 (LPLTEEQRKKIEENRQKALARRAEKLLAEQHQ) are a coiled coil. The segment at 5-30 (LTEEQRKKIEENRQKALARRAEKLLA) is mediates interaction with RPA2. Residues 7 to 20 (EEQRKKIEENRQKA) are compositionally biased toward basic and acidic residues. Residues 72-83 (KQQNLSSSSNAD) show a composition bias toward polar residues. Phosphoserine is present on residues Ser112, Ser123, Ser129, and Ser151. Polar residues-rich tracts occupy residues 171–183 (KSSQ…SSGQ) and 197–238 (ASPS…NSQK). Phosphoserine is present on Ser198. 2 HARP domains span residues 226 to 303 (SGSS…QPLE) and 327 to 398 (SLSF…DPLP). The Helicase ATP-binding domain maps to 445 to 600 (NFAIAKGGRL…YTQIIAVKPT (156 aa)). Residue 458–465 (DDMGLGKT) coordinates ATP. The DESH box motif lies at 549–552 (DESH). The Nuclear localization signal signature appears at 644 to 661 (RRLKSDVLSQLPAKQRKI). Residues 716-869 (YILDLLESGR…ETNFSEMTES (154 aa)) form the Helicase C-terminal domain. The segment at 904–934 (ESFDPGSASGTSGSSSQNMGDTLDESSLTAS) is disordered. The span at 909–919 (GSASGTSGSSS) shows a compositional bias: low complexity. Positions 920–934 (QNMGDTLDESSLTAS) are enriched in polar residues.

The protein belongs to the SNF2/RAD54 helicase family. SMARCAL1 subfamily. As to quaternary structure, interacts with RPA2; the interaction is direct and mediates the recruitment by the RPA complex of SMARCAL1 to sites of DNA damage. DNA damage-regulated phosphorylation by kinases that may include ATM, ATR and PRKDC. In terms of tissue distribution, ubiquitously expressed, with high levels in testis.

It is found in the nucleus. It catalyses the reaction ATP + H2O = ADP + phosphate + H(+). ATP-dependent annealing helicase that binds selectively to fork DNA relative to ssDNA or dsDNA and catalyzes the rewinding of the stably unwound DNA. Rewinds single-stranded DNA bubbles that are stably bound by replication protein A (RPA). Acts throughout the genome to reanneal stably unwound DNA, performing the opposite reaction of many enzymes, such as helicases and polymerases, that unwind DNA. May play an important role in DNA damage response by acting at stalled replication forks. The polypeptide is SWI/SNF-related matrix-associated actin-dependent regulator of chromatin subfamily A-like protein 1 (Homo sapiens (Human)).